The following is a 418-amino-acid chain: Tyrosine--tRNA ligase (418 aa).

Tyr35 contributes to the L-tyrosine binding site. Positions 40–49 (PTAKSLHIGH) match the 'HIGH' region motif. L-tyrosine is bound by residues Tyr168 and Gln172. The 'KMSKS' region motif lies at 228-232 (KYGKT). Lys231 is a binding site for ATP. The S4 RNA-binding domain maps to 352–410 (PTVVGAMVAAGVVDTKSGGRRAVAEGGAYLNNVKVADPDQRLTDDDFLCGRVALVRRGK).

The protein belongs to the class-I aminoacyl-tRNA synthetase family. TyrS type 1 subfamily. In terms of assembly, homodimer.

The protein localises to the cytoplasm. The enzyme catalyses tRNA(Tyr) + L-tyrosine + ATP = L-tyrosyl-tRNA(Tyr) + AMP + diphosphate + H(+). Functionally, catalyzes the attachment of tyrosine to tRNA(Tyr) in a two-step reaction: tyrosine is first activated by ATP to form Tyr-AMP and then transferred to the acceptor end of tRNA(Tyr). The sequence is that of Tyrosine--tRNA ligase from Cutibacterium acnes (strain DSM 16379 / KPA171202) (Propionibacterium acnes).